Consider the following 246-residue polypeptide: Carboxy-S-adenosyl-L-methionine synthase (246 aa).

Residues Tyr-39, 64 to 66, 89 to 90, 117 to 118, Asn-132, and Arg-199 contribute to the S-adenosyl-L-methionine site; these read GCS, DN, and DI.

The protein belongs to the class I-like SAM-binding methyltransferase superfamily. Cx-SAM synthase family. Homodimer.

It catalyses the reaction prephenate + S-adenosyl-L-methionine = carboxy-S-adenosyl-L-methionine + 3-phenylpyruvate + H2O. Functionally, catalyzes the conversion of S-adenosyl-L-methionine (SAM) to carboxy-S-adenosyl-L-methionine (Cx-SAM). The polypeptide is Carboxy-S-adenosyl-L-methionine synthase (Enterobacter sp. (strain 638)).